A 218-amino-acid polypeptide reads, in one-letter code: Recombination protein RecR (218 aa).

The C4-type zinc-finger motif lies at 56–71 (CRICCNISREEVCRIC). In terms of domain architecture, Toprim spans 79–195 (STICVVEEPK…VVSRLASGMP (117 aa)).

Belongs to the RecR family.

May play a role in DNA repair. It seems to be involved in an RecBC-independent recombinational process of DNA repair. It may act with RecF and RecO. In Corynebacterium diphtheriae (strain ATCC 700971 / NCTC 13129 / Biotype gravis), this protein is Recombination protein RecR.